The primary structure comprises 296 residues: Trimeric intracellular cation channel type A (296 aa).

The Lumenal segment spans residues 1–19 (MELPGALQLGELAAAFASV). A helical membrane pass occupies residues 20–37 (PVFPLFDAAYFIVSVLYL). The Cytoplasmic portion of the chain corresponds to 38–51 (KYEPGAVEMSRKSP). The helical transmembrane segment at 52-73 (FASWLCAMLHCFGSYILADLLL) threads the bilayer. Residue Gly74 coordinates Ca(2+). Residues 74-85 (GESPIHYFSNNS) lie on the Lumenal side of the membrane. A helical membrane pass occupies residues 86 to 103 (SVILATAVWYLIFFCPMN). Topologically, residues 104–107 (LFYK) are cytoplasmic. The chain crosses the membrane as a helical span at residues 108–126 (CVSFLPVKLIFVAMKEVVR). A 1,2-diacyl-sn-glycero-3-phospho-(1D-myo-inositol-4,5-bisphosphate) is bound by residues Lys122 and Arg126. Residues 127 to 144 (VRKIAAGVHHAHHQYHHG) lie on the Lumenal side of the membrane. The helical transmembrane segment at 145-162 (WFIMMATGWVKGSGVALM) threads the bilayer. Over 163-183 (SNFEQLLRGVWRPETNEILHM) the chain is Cytoplasmic. A helical transmembrane segment spans residues 184–201 (SFPTKASLYGTVLFTLQQ). The Lumenal portion of the chain corresponds to 202–209 (THWLPVSE). The helical transmembrane segment at 210–230 (ANLVFFFTMFMIVCKVFMTAT) threads the bilayer. At 231 to 273 (HSHASPFAPVEGFICPVFFGSVSSGHTSHHNQHGHSHEASYQP) the chain is on the cytoplasmic side. The disordered stretch occupies residues 256 to 296 (HTSHHNQHGHSHEASYQPPPPVKSKEELNEGTRKRKAKKAE). Positions 278–287 (KSKEELNEGT) are enriched in basic and acidic residues.

This sequence belongs to the TMEM38 family. In terms of assembly, homotrimer; conformation seems to be controled by binding to diacylglycerol (DAG).

The protein resides in the sarcoplasmic reticulum membrane. The protein localises to the nucleus membrane. The catalysed reaction is K(+)(in) = K(+)(out). With respect to regulation, channel activity is activated by a change of voltage within the sarcoplasmic reticulum lumen and blocked by luminal high Ca(2+) levels. In terms of biological role, intracellular monovalent cation channel required for maintenance of rapid intracellular calcium release. Acts as a potassium counter-ion channel that functions in synchronization with calcium release from intracellular stores. Opened by a change of voltage within the sarcoplasmic reticulum lumen. This is Trimeric intracellular cation channel type A (TMEM38A) from Gallus gallus (Chicken).